A 297-amino-acid chain; its full sequence is 4-hydroxy-tetrahydrodipicolinate synthase (297 aa).

Thr-47 provides a ligand contact to pyruvate. Residue Tyr-136 is the Proton donor/acceptor of the active site. The active-site Schiff-base intermediate with substrate is the Lys-165. Residue Ile-206 coordinates pyruvate.

This sequence belongs to the DapA family. In terms of assembly, homotetramer; dimer of dimers.

The protein localises to the cytoplasm. It catalyses the reaction L-aspartate 4-semialdehyde + pyruvate = (2S,4S)-4-hydroxy-2,3,4,5-tetrahydrodipicolinate + H2O + H(+). The protein operates within amino-acid biosynthesis; L-lysine biosynthesis via DAP pathway; (S)-tetrahydrodipicolinate from L-aspartate: step 3/4. Its function is as follows. Catalyzes the condensation of (S)-aspartate-beta-semialdehyde [(S)-ASA] and pyruvate to 4-hydroxy-tetrahydrodipicolinate (HTPA). The chain is 4-hydroxy-tetrahydrodipicolinate synthase from Campylobacter curvus (strain 525.92).